A 55-amino-acid polypeptide reads, in one-letter code: Large ribosomal subunit protein bL33 (55 aa).

The protein belongs to the bacterial ribosomal protein bL33 family.

This is Large ribosomal subunit protein bL33 from Edwardsiella ictaluri (strain 93-146).